The following is a 518-amino-acid chain: Putative N-acetylmuramoyl-L-alanine amidase YrvJ (518 aa).

A signal peptide spans 1–27; the sequence is MNKKYFVLIVCIIFTSALFPTFSSVTA. SH3b domains lie at 29 to 91, 102 to 164, 181 to 243, and 258 to 320; these read QGEA…ITKE, SDTV…TSGG, STTG…LTSS, and AKKA…VQTS. Disordered regions lie at residues 94 to 121 and 160 to 186; these read ASTSSSGSSDTVTSTDPDLRMRSGPGTS and VTSGGSSSASDESDQTEDSGASTTGTV. Low complexity-rich tracts occupy residues 95 to 108 and 160 to 169; these read STSSSGSSDTVTST and VTSGGSSSAS. A disordered region spans residues 322–352; it reads SAEEAGEPPVSDSPSGNGSLNNKTIIVDPGH. Positions 333-345 are enriched in polar residues; that stretch reads DSPSGNGSLNNKT. Residues 346 to 514 form the MurNAc-LAA domain; sequence IIVDPGHGGK…VTDGIESGLE (169 aa).

This sequence belongs to the N-acetylmuramoyl-L-alanine amidase 3 family.

It is found in the secreted. It localises to the cell wall. The catalysed reaction is Hydrolyzes the link between N-acetylmuramoyl residues and L-amino acid residues in certain cell-wall glycopeptides.. Probably involved in cell-wall metabolism. The polypeptide is Putative N-acetylmuramoyl-L-alanine amidase YrvJ (yrvJ) (Bacillus subtilis (strain 168)).